A 75-amino-acid chain; its full sequence is Penaeidin-3l (75 aa).

The N-terminal stretch at 1-19 (MRLVVCLVFLASFALVCQG) is a signal peptide. At glutamine 20 the chain carries Pyrrolidone carboxylic acid. Intrachain disulfides connect cysteine 44/cysteine 59, cysteine 48/cysteine 66, and cysteine 60/cysteine 67. Serine 74 is subject to Serine amide.

It belongs to the penaeidin family.

It is found in the cytoplasmic granule. In terms of biological role, antibacterial and antifungal activity. Presents chitin-binding activity. The protein is Penaeidin-3l of Penaeus setiferus (Atlantic white shrimp).